A 141-amino-acid polypeptide reads, in one-letter code: Deoxyuridine 5'-triphosphate nucleotidohydrolase (141 aa).

This sequence belongs to the dUTPase family. Requires Mg(2+) as cofactor.

It catalyses the reaction dUTP + H2O = dUMP + diphosphate + H(+). Its pathway is pyrimidine metabolism; dUMP biosynthesis; dUMP from dCTP (dUTP route): step 2/2. This enzyme is involved in nucleotide metabolism: it produces dUMP, the immediate precursor of thymidine nucleotides and it decreases the intracellular concentration of dUTP so that uracil cannot be incorporated into DNA. The sequence is that of Deoxyuridine 5'-triphosphate nucleotidohydrolase from Chlorella (PBCV-1).